The chain runs to 417 residues: Phosphoglycerate kinase 1 (417 aa).

Ser-2 carries the post-translational modification N-acetylserine. A phosphoserine mark is found at Ser-2 and Ser-4. Lys-6 is subject to N6-succinyllysine. Lys-11 bears the N6-acetyllysine mark. (2R)-3-phosphoglycerate is bound by residues Val-23, Asp-24, Phe-25, Asn-26, Gln-38, and Arg-39. Positions 38–43 (QRIKAA) are mitochondrial targeting region exposed following cis-trans isomerization by PIN1 and recognized by the TOM complex for mitochondrial translocation of the protein. At Lys-48 the chain carries N6-acetyllysine; alternate. Lys-48 bears the N6-succinyllysine; alternate mark. (2R)-3-phosphoglycerate is bound by residues Ser-62, His-63, Gly-65, and Arg-66. Lys-75 carries the post-translational modification N6-acetyllysine. Tyr-76 carries the post-translational modification Phosphotyrosine. Lys-86 and Lys-91 each carry N6-acetyllysine. Residue Lys-97 is modified to N6-acetyllysine; alternate. At Lys-97 the chain carries N6-(2-hydroxyisobutyryl)lysine; alternate. Leu-122 and Arg-123 together coordinate (2R)-3-phosphoglycerate. Position 131 is an N6-acetyllysine; alternate (Lys-131). Residue Lys-131 is modified to N6-malonyllysine; alternate. Position 146 is an N6-acetyllysine (Lys-146). Positions 170 and 171 each coordinate (2R)-3-phosphoglycerate. Lys-191 is modified (N6-succinyllysine). Phosphotyrosine is present on Tyr-196. Lys-199 bears the N6-acetyllysine mark. Phosphoserine is present on Ser-203. Gly-214 serves as a coordination point for ADP. A CDP-binding site is contributed by Gly-214. AMP contacts are provided by Ala-215 and Lys-216. An ATP-binding site is contributed by Ala-215. Ala-215 provides a ligand contact to Mg(2+). An N6-(2-hydroxyisobutyryl)lysine modification is found at Lys-216. Ala-218 and Asp-219 together coordinate Mg(2+). Asp-219 contacts CDP. Lys-220 contributes to the AMP binding site. Lys-220 provides a ligand contact to ATP. N6-(2-hydroxyisobutyryl)lysine is present on Lys-220. Gly-238 lines the ADP pocket. Gly-238 serves as a coordination point for CDP. Position 239 (Gly-239) interacts with AMP. Gly-239 serves as a coordination point for ATP. 2 positions are modified to N6-acetyllysine: Lys-267 and Lys-291. Gly-313 provides a ligand contact to AMP. Gly-313 is a binding site for ATP. At Lys-323 the chain carries N6-(2-hydroxyisobutyryl)lysine. The CDP site is built by Gly-338, Val-340, and Phe-343. Phe-343 is an ADP binding site. Glu-344 contacts AMP. Glu-344 is a binding site for ATP. The residue at position 361 (Lys-361) is an N6-acetyllysine. Residues Asp-375 and Thr-376 each coordinate ATP. Asp-375 provides a ligand contact to Mg(2+).

The protein belongs to the phosphoglycerate kinase family. In terms of assembly, monomer. Interacts with kinase MAPK1/ERK2; the interaction is direct, occurs under hypoxic conditions, and promotes its interaction with PIN1. Interacts with peptidyl-prolyl cis-trans isomerase PIN1; the interaction is direct, occurs under hypoxic conditions, and targets the protein to the mitochondrion by promoting interactions with the TOM complex. Interacts with mitochondrial circRNA mcPGK1 (via its 2nd stem-loop); the interaction is direct and targets the protein to the mitochondrion by promoting interactions with the TOM complex. Interacts with pyruvate dehydrogenase kinase PDK1; the interaction is direct, occurs under hypoxic conditions and leads to PDK1-mediated inhibition of pyruvate dehydrogenase complex activity. Mg(2+) is required as a cofactor. Phosphorylated at Ser-203 by MAPK1/ERK2 under hypoxic conditions, which promotes its mitochondrial targeting. Testis, lung, brain, skeletal muscle, liver, intestine, and kidney (at protein level).

The protein localises to the cytoplasm. The protein resides in the cytosol. Its subcellular location is the mitochondrion matrix. The enzyme catalyses (2R)-3-phosphoglycerate + ATP = (2R)-3-phospho-glyceroyl phosphate + ADP. It catalyses the reaction L-seryl-[protein] + ATP = O-phospho-L-seryl-[protein] + ADP + H(+). It participates in carbohydrate degradation; glycolysis; pyruvate from D-glyceraldehyde 3-phosphate: step 2/5. Its function is as follows. Catalyzes one of the two ATP producing reactions in the glycolytic pathway via the reversible conversion of 1,3-diphosphoglycerate to 3-phosphoglycerate. Both L- and D- forms of purine and pyrimidine nucleotides can be used as substrates, but the activity is much lower on pyrimidines. In addition to its role as a glycolytic enzyme, it seems that PGK-1 acts as a polymerase alpha cofactor protein (primer recognition protein). Acts as a protein kinase when localized to the mitochondrion where it phosphorylates pyruvate dehydrogenase kinase PDK1 to inhibit pyruvate dehydrogenase complex activity and suppress the formation of acetyl-coenzyme A from pyruvate, and consequently inhibit oxidative phosphorylation and promote glycolysis. May play a role in sperm motility. The polypeptide is Phosphoglycerate kinase 1 (Pgk1) (Mus musculus (Mouse)).